The chain runs to 224 residues: MDQQSTLANTSTPSVWKTLFWQGVWKNNSTLVQLLGLCPLLAVSNSVTNALGLGIATLFVLICSNTVVSLFRKQIPHEIRIPIYVMIIATTVTVVQLLMNAYTYSLYQSLGIFIPLIVTNCIVIGRAEAFASKNPLSHAMFDGFAMGLGMCLSLVFLGAIREILGNGTLFDGIEHLLGDWAKGLRIELFHLDSHFLLAILPPGAFIGLGLILAIKNVIDQRNKA.

The next 5 membrane-spanning stretches (helical) occupy residues 51–71 (LGLG…VSLF), 81–101 (IPIY…LMNA), 105–125 (SLYQ…IVIG), 140–160 (MFDG…LGAI), and 194–214 (HFLL…ILAI).

It belongs to the NqrDE/RnfAE family. The complex is composed of six subunits: RnfA, RnfB, RnfC, RnfD, RnfE and RnfG.

The protein resides in the cell inner membrane. In terms of biological role, part of a membrane-bound complex that couples electron transfer with translocation of ions across the membrane. This chain is Ion-translocating oxidoreductase complex subunit E, found in Pasteurella multocida (strain Pm70).